The sequence spans 1243 residues: Plasma membrane calcium-transporting ATPase 2 (1243 aa).

Residues Met1–Asn13 are compositionally biased toward polar residues. The disordered stretch occupies residues Met1–Phe24. Residues Met1–Thr94 are Cytoplasmic-facing. Ser18 is subject to Phosphoserine. The chain crosses the membrane as a helical span at residues Phe95–Ala115. The Extracellular portion of the chain corresponds to Ile116 to Ile152. Residues Glu153–Trp173 traverse the membrane as a helical segment. Residues Ser174–Leu390 lie on the Cytoplasmic side of the membrane. Residues Gly334–Lys381 are disordered. A helical transmembrane segment spans residues Thr391 to Ile410. Residues Ile411–Phe443 are Extracellular-facing. The helical transmembrane segment at Phe444–Leu461 threads the bilayer. Over Ala462–Ile875 the chain is Cytoplasmic. The 4-aspartylphosphate intermediate role is filled by Asp499. Mg(2+)-binding residues include Asp820 and Asp824. Residues Ser876–Thr895 form a helical membrane-spanning segment. Topologically, residues Gly896–Leu905 are extracellular. A helical transmembrane segment spans residues Lys906–Ala926. Residues Thr927–Leu946 lie on the Cytoplasmic side of the membrane. The chain crosses the membrane as a helical span at residues Ile947–Leu969. The Extracellular segment spans residues Leu970–Leu987. The helical transmembrane segment at His988 to Asn1009 threads the bilayer. The Cytoplasmic portion of the chain corresponds to Glu1010–Arg1028. Residues Asn1029–Gly1050 form a helical membrane-spanning segment. At Gly1051 to Gln1060 the chain is on the extracellular side. A helical membrane pass occupies residues Leu1061 to Ala1082. At Thr1083–Leu1243 the chain is on the cytoplasmic side. Phosphoserine is present on residues Glu1120, Arg1132, and Leu1134. A calmodulin-binding subdomain A region spans residues Leu1123–Gln1140. Residue Thr1139 is modified to Phosphothreonine; by PKC. The segment at Ile1141–Ser1150 is calmodulin-binding subdomain B. 6 positions are modified to phosphoserine: Ala1146, Leu1151, Ser1163, His1165, Asp1177, and Ser1178. The residue at position 1188 (Thr1188) is a Phosphothreonine. Residues Ala1194 to Leu1243 are disordered. Low complexity-rich tracts occupy residues Leu1196–Ser1211 and Thr1220–Ser1234. Ser1201 is subject to Phosphoserine; by PKA. Ser1211 carries the post-translational modification Phosphoserine.

Belongs to the cation transport ATPase (P-type) (TC 3.A.3) family. Type IIB subfamily. In terms of assembly, interacts with PDZD11. Mainly expressed in brain cortex. Found in low levels in skeletal muscle, heart muscle, stomach, liver, kidney and lung. Isoforms containing segment B are found in brain cortex and at low levels in other tissues. Isoforms containing segments X and W are found at low levels in all tissues. Isoforms containing segment A and segment Z are found at low levels in skeletal muscle and heart muscle.

It is found in the cell membrane. The protein localises to the synapse. The protein resides in the apical cell membrane. It localises to the basolateral cell membrane. It carries out the reaction Ca(2+)(in) + ATP + H2O = Ca(2+)(out) + ADP + phosphate + H(+). With respect to regulation, up-regulated by calmodulin which increases the affinity of the pump for Ca(2+) ions. ATP-driven Ca(2+) ion pump involved in the maintenance of basal intracellular Ca(2+) levels in specialized cells of cerebellar circuit and vestibular and cochlear systems. Uses ATP as an energy source to transport cytosolic Ca(2+) ions across the plasma membrane to the extracellular compartment. Has fast activation and Ca(2+) clearance rate suited to control fast neuronal Ca(2+) dynamics. At parallel fiber to Purkinje neuron synapse, mediates presynaptic Ca(2+) efflux in response to climbing fiber-induced Ca(2+) rise. Provides for fast return of Ca(2+) concentrations back to their resting levels, ultimately contributing to long-term depression induction and motor learning. Plays an essential role in hearing and balance. In cochlear hair cells, shuttles Ca(2+) ions from stereocilia to the endolymph and dissipates Ca(2+) transients generated by the opening of the mechanoelectrical transduction channels. Regulates Ca(2+) levels in the vestibular system, where it contributes to the formation of otoconia. In non-excitable cells, regulates Ca(2+) signaling through spatial control of Ca(2+) ions extrusion and dissipation of Ca(2+) transients generated by store-operated channels. In lactating mammary gland, allows for the high content of Ca(2+) ions in the milk. This is Plasma membrane calcium-transporting ATPase 2 from Homo sapiens (Human).